Reading from the N-terminus, the 184-residue chain is dCTP deaminase (184 aa).

DCTP-binding positions include 107-112 (KSTYAR), 131-133 (TLE), Gln152, Tyr166, and Gln176. The Proton donor/acceptor role is filled by Glu133.

The protein belongs to the dCTP deaminase family. Homotrimer.

The enzyme catalyses dCTP + H2O + H(+) = dUTP + NH4(+). The protein operates within pyrimidine metabolism; dUMP biosynthesis; dUMP from dCTP (dUTP route): step 1/2. Its function is as follows. Catalyzes the deamination of dCTP to dUTP. The protein is dCTP deaminase of Gemmatimonas aurantiaca (strain DSM 14586 / JCM 11422 / NBRC 100505 / T-27).